We begin with the raw amino-acid sequence, 162 residues long: Putative ethylene-responsive transcription factor ERF121 (162 aa).

Disordered regions lie at residues 1-21, 84-103, and 139-162; these read MDYS…PPNL, IKQE…KWSA, and KRSA…GGDD. The segment covering 87-98 has biased composition (basic residues); that stretch reads EKKHKGVRKKPS. Positions 89–146 form a DNA-binding region, AP2/ERF; that stretch reads KHKGVRKKPSGKWSAEIWDPSTRTRRWLGTFPTAEMAADAYDEAAAALVEKRSARRGS.

It belongs to the AP2/ERF transcription factor family. ERF subfamily.

Its subcellular location is the nucleus. Probably acts as a transcriptional activator. Binds to the GCC-box pathogenesis-related promoter element. May be involved in the regulation of gene expression by stress factors and by components of stress signal transduction pathways. In Arabidopsis thaliana (Mouse-ear cress), this protein is Putative ethylene-responsive transcription factor ERF121 (ERF121).